Here is a 680-residue protein sequence, read N- to C-terminus: Methionine--tRNA ligase (680 aa).

The 'HIGH' region motif lies at 15–25 (PYANGPVHIGH). Cysteine 147, cysteine 150, cysteine 160, and cysteine 163 together coordinate Zn(2+). The 'KMSKS' region motif lies at 332–336 (KISTS). Position 335 (threonine 335) interacts with ATP. Residues 579-680 (DFLKLDIRVG…AEVAPGSQVK (102 aa)) form the tRNA-binding domain.

The protein belongs to the class-I aminoacyl-tRNA synthetase family. MetG type 1 subfamily. Homodimer. Zn(2+) is required as a cofactor.

The protein localises to the cytoplasm. The enzyme catalyses tRNA(Met) + L-methionine + ATP = L-methionyl-tRNA(Met) + AMP + diphosphate. Is required not only for elongation of protein synthesis but also for the initiation of all mRNA translation through initiator tRNA(fMet) aminoacylation. The sequence is that of Methionine--tRNA ligase from Porphyromonas gingivalis (strain ATCC 33277 / DSM 20709 / CIP 103683 / JCM 12257 / NCTC 11834 / 2561).